The sequence spans 96 residues: Nucleoid-associated protein CCA_00330 (96 aa).

This sequence belongs to the YbaB/EbfC family. Homodimer.

The protein localises to the cytoplasm. It is found in the nucleoid. Its function is as follows. Binds to DNA and alters its conformation. May be involved in regulation of gene expression, nucleoid organization and DNA protection. This Chlamydia caviae (strain ATCC VR-813 / DSM 19441 / 03DC25 / GPIC) (Chlamydophila caviae) protein is Nucleoid-associated protein CCA_00330.